Reading from the N-terminus, the 294-residue chain is Ethanolamine ammonia-lyase small subunit (294 aa).

Adenosylcob(III)alamin-binding residues include Val207 and Glu228.

This sequence belongs to the EutC family. The basic unit is a heterodimer which dimerizes to form tetramers. The heterotetramers trimerize; 6 large subunits form a core ring with 6 small subunits projecting outwards. The cofactor is adenosylcob(III)alamin.

The protein localises to the bacterial microcompartment. It carries out the reaction ethanolamine = acetaldehyde + NH4(+). The protein operates within amine and polyamine degradation; ethanolamine degradation. Functionally, catalyzes the deamination of various vicinal amino-alcohols to oxo compounds. Allows this organism to utilize ethanolamine as the sole source of nitrogen and carbon in the presence of external vitamin B12. This chain is Ethanolamine ammonia-lyase small subunit, found in Clostridium tetani (strain Massachusetts / E88).